A 680-amino-acid polypeptide reads, in one-letter code: Lipase 1 (680 aa).

The N-terminal stretch at 1 to 34 (MKSQNKYSIRKFSVGASSILIATLLFLSGGQAQA) is a signal peptide. The propeptide occupies 35-290 (AEKQVNMGNS…AKAKDDQTNK (256 aa)). Residues 82 to 259 (KNLHNDKTIS…PTKDNDKKNG (178 aa)) are disordered. Positions 84–112 (LHNDKTISEENHRKTDDLNKDQLKDDKKS) are enriched in basic and acidic residues. A compositionally biased stretch (polar residues) spans 125 to 138 (KNNNANPSDVNQGL). Over residues 148–170 (SKVASQQQSKEADNSQDSNANNN) the composition is skewed to low complexity. Polar residues predominate over residues 204-223 (QPQQNNQANDKITNYNFNNE). A compositionally biased stretch (basic and acidic residues) spans 224–234 (QEVKPQKDEKT). The span at 235 to 246 (LSVSDLKNNQKS) shows a compositional bias: polar residues. Residue serine 408 is the Nucleophile of the active site. Aspartate 600 serves as the catalytic Charge relay system. Residue aspartate 638 participates in Ca(2+) binding. Histidine 639 acts as the Charge relay system in catalysis. Ca(2+) contacts are provided by aspartate 641, aspartate 646, and aspartate 649.

This sequence belongs to the AB hydrolase superfamily. Lipase family.

It is found in the secreted. It catalyses the reaction a triacylglycerol + H2O = a diacylglycerol + a fatty acid + H(+). This chain is Lipase 1 (lip1), found in Staphylococcus aureus (strain MSSA476).